The sequence spans 262 residues: MDKRWSLQGMTALVTGAASGIGYAIVEELASFGAIIHICDISETLLSQSLSEWEKKGFQVSGSICDVASRPDREKLMQTVSSLFDGKLNILVNNVGVIRGKPTTEYVAEDFSYHISTNLEPAFHFSQLSHLLLKASGFGSIVFMSSATGVVSVQCGSIYSLTKGALNQLTRNLACEWAKDGIRANAVAPNVVKTPLSQSYLEDVGFKEALFSRTPLGRAGEPNEVASLVVFLCLPAASYITGQTICIDGGFTVNAFSYKPQA.

13–37 contributes to the NADP(+) binding site; that stretch reads LVTGAASGIGYAIVEELASFGAIIH. Ser146 serves as a coordination point for substrate. Tyr159 serves as the catalytic Proton acceptor.

The protein belongs to the short-chain dehydrogenases/reductases (SDR) family. SDR65C subfamily.

The chain is Tropinone reductase homolog At2g29310 from Arabidopsis thaliana (Mouse-ear cress).